The chain runs to 393 residues: DNA/RNA-binding protein KIN17 (393 aa).

The C2H2-type zinc-finger motif lies at 28–50 (CQMCQKQCRDENGFKCHCMSESH). The interval 51–160 (QRQLLLASEN…RQLELEKKKK (110 aa)) is winged helix-turn-helix (wHTH). Lys-135 carries the post-translational modification N6,N6,N6-trimethyllysine; by METTL22; in vitro. The residue at position 135 (Lys-135) is an N6-methyllysine. A coiled-coil region spans residues 147–180 (ETIRRQLELEKKKKQDLDDEEKTAKFIEEQVRRG). A compositionally biased stretch (low complexity) spans 209–224 (KGACSSSGATSSKSST). The tract at residues 209–260 (KGACSSSGATSSKSSTLGPSALKTIGSSASVKRKESSQSSTQSKEKKKKKSA) is disordered. Positions 250–277 (QSKEKKKKKSALDEIMEIEEEKKRTART) form a coiled coil. The tract at residues 284–334 (EIIVKIITKKLGEKYHKKKAIVKEVIDKYTAVVKMIDSGDKLKLDQTHLET) is C-terminal subdomain A. The segment at 340–391 (GKRILVLNGGYRGNEGTLESINEKTFSATIVIETGPLKGRRVEGIQYEDISK) is C-terminal subdomain B.

The protein belongs to the KIN17 family. In terms of assembly, associated with DNA polymerase alpha, RFC1 and cyclin A, in multiprotein DNA replication complexes. Also associates with replication origins at the G1/S phase boundary and throughout the S phase in vivo. (Microbial infection) Interacts with SV40 large T antigen. As to expression, ubiquitously expressed in all tissues examined, with highest levels in skeletal muscle, heart and testis. Differentially expressed in non-tumorigenic and tumorigenic cell lines. Highly expressed in proliferating epithelial keratinocyte cells in vitro (at protein level).

The protein resides in the nucleus. It is found in the cytoplasm. In terms of biological role, involved in DNA replication and the cellular response to DNA damage. May participate in DNA replication factories and create a bridge between DNA replication and repair mediated by high molecular weight complexes. May play a role in illegitimate recombination and regulation of gene expression. May participate in mRNA processing. Binds, in vitro, to double-stranded DNA. Also shown to bind preferentially to curved DNA in vitro and in vivo. Binds via its C-terminal domain to RNA in vitro. This chain is DNA/RNA-binding protein KIN17, found in Homo sapiens (Human).